An 82-amino-acid chain; its full sequence is Toxin NaTx-13 (82 aa).

The LCN-type CS-alpha/beta domain maps to 6–70; sequence PGGYPVNQFK…KNSIEVFSCG (65 aa). Intrachain disulfides connect cysteine 16–cysteine 69, cysteine 20–cysteine 44, cysteine 30–cysteine 49, and cysteine 34–cysteine 51.

Belongs to the long (4 C-C) scorpion toxin superfamily. Sodium channel inhibitor family. As to expression, expressed by the venom gland.

The protein resides in the secreted. Its function is as follows. Probable sodium channel inhibitor. In Centruroides sculpturatus (Arizona bark scorpion), this protein is Toxin NaTx-13.